A 258-amino-acid chain; its full sequence is Phosphoprotein ECPP44 (258 aa).

3 disordered regions span residues 1–25 (MASD…DRGL), 46–131 (EKVQ…PVEV), and 148–175 (KLPG…VDCA). 4 stretches are compositionally biased toward basic and acidic residues: residues 11–25 (SVEK…DRGL), 46–80 (EKVQ…EKLH), 109–124 (GLKE…KEED), and 148–158 (KLPGGGKKVEE).

This sequence belongs to the plant dehydrin family. Post-translationally, phosphorylated in embryogenic and somatic embryos. Not phosphorylated in non-embryogenic cells.

In terms of biological role, phosphorylation of ECCP44 protein is thought to be involved in the acquisition of embryogenic competence. Unlike other dehydrins, it is not thought to function as an environmental stress tolerant. The chain is Phosphoprotein ECPP44 (ECPP44) from Daucus carota (Wild carrot).